The sequence spans 471 residues: Phosphatidylserine synthase 1 (471 aa).

Residue Ala2 is modified to N-acetylalanine. At 2–35 the chain is on the cytoplasmic side; sequence ASCVGSRTLSKDDVNYRMHFRMINEQQVEDITID. Residues 36–56 form a helical membrane-spanning segment; that stretch reads FFYRPHTITLLSFTIVSLMYF. The Lumenal portion of the chain corresponds to 57–72; sequence AFTRDDSVPEDNIWRG. Residues 73–93 traverse the membrane as a helical segment; the sequence is ILSVIFFFLIISVLAFPNGPF. The Cytoplasmic portion of the chain corresponds to 94–102; the sequence is TRPHPALWR. A helical membrane pass occupies residues 103–123; it reads MVFGLSVLYFLFLVFLLFLNF. The Lumenal segment spans residues 124–160; sequence EQVKSLMYWLDPNLRYATREADIMEYAVNCHVITWER. The chain crosses the membrane as a helical span at residues 161 to 181; sequence IVSHFDIFAFGHFWGWAMKAL. Topologically, residues 182–186 are cytoplasmic; that stretch reads LIRSY. The helical transmembrane segment at 187-207 threads the bilayer; the sequence is GLCWTISITWELTELFFMHLL. At 208–216 the chain is on the lumenal side; it reads PNFAECWWD. Residues 217–237 form a helical membrane-spanning segment; the sequence is QVILDILLCNGGGIWLGMVVC. Over 238-286 the chain is Cytoplasmic; that stretch reads RFLEMRTYHWASFKDIHTTTGKIKRAVLQFTPASWTYVRWFDPKSSFQR. The chain crosses the membrane as a helical span at residues 287-307; it reads VAGVYLFMIIWQLTELNTFFL. Residues 308 to 309 are Lumenal-facing; the sequence is KH. Residues 310–330 traverse the membrane as a helical segment; that stretch reads IFVFQASHPLSWCRILFIGCI. Residues 331–355 lie on the Cytoplasmic side of the membrane; sequence TAPTVRQYYAYLTDTQCKRVGTQCW. Residues 356–376 traverse the membrane as a helical segment; that stretch reads VFGVIGFLEAIVCIKFGQDLF. The Lumenal segment spans residues 377–380; it reads SKTQ. A helical transmembrane segment spans residues 381–401; it reads ILYVVFWLLCVAFTTFLCLYG. Residues 402-471 lie on the Cytoplasmic side of the membrane; the sequence is MVWYAEHYGH…SKVTNGVGKK (70 aa). 3 positions are modified to phosphoserine: Ser417, Ser440, and Ser452. Positions 426 to 471 are disordered; the sequence is ISWHHGKGSKGSEDSPPKHSSNNESHSSRRRNRHSKSKVTNGVGKK. A compositionally biased stretch (basic residues) spans 453 to 462; the sequence is SRRRNRHSKS.

This sequence belongs to the phosphatidyl serine synthase family.

Its subcellular location is the endoplasmic reticulum membrane. It carries out the reaction a 1,2-diacyl-sn-glycero-3-phosphoethanolamine + L-serine = a 1,2-diacyl-sn-glycero-3-phospho-L-serine + ethanolamine. It catalyses the reaction a 1,2-diacyl-sn-glycero-3-phosphocholine + L-serine = a 1,2-diacyl-sn-glycero-3-phospho-L-serine + choline. It functions in the pathway phospholipid metabolism; phosphatidylserine biosynthesis. With respect to regulation, inhibited by exogenous phosphatidylserine. In terms of biological role, catalyzes a base-exchange reaction in which the polar head group of phosphatidylethanolamine (PE) or phosphatidylcholine (PC) is replaced by L-serine. Catalyzes mainly the conversion of phosphatidylcholine. Also converts, in vitro and to a lesser extent, phosphatidylethanolamine. This is Phosphatidylserine synthase 1 (PTDSS1) from Cricetulus griseus (Chinese hamster).